A 459-amino-acid polypeptide reads, in one-letter code: Putrescine aminotransferase (459 aa).

Pyridoxal 5'-phosphate is bound by residues 150 to 151 and Gln-274; that span reads GT. Lys-300 carries the post-translational modification N6-(pyridoxal phosphate)lysine. Thr-332 contributes to the pyridoxal 5'-phosphate binding site.

The protein belongs to the class-III pyridoxal-phosphate-dependent aminotransferase family. Putrescine aminotransferase subfamily. Requires pyridoxal 5'-phosphate as cofactor.

The catalysed reaction is an alkane-alpha,omega-diamine + 2-oxoglutarate = an omega-aminoaldehyde + L-glutamate. The enzyme catalyses putrescine + 2-oxoglutarate = 1-pyrroline + L-glutamate + H2O. It carries out the reaction cadaverine + 2-oxoglutarate = 5-aminopentanal + L-glutamate. It participates in amine and polyamine degradation; putrescine degradation; 4-aminobutanal from putrescine (transaminase route): step 1/1. Catalyzes the aminotransferase reaction from putrescine to 2-oxoglutarate, leading to glutamate and 4-aminobutanal, which spontaneously cyclizes to form 1-pyrroline. This is the first step in one of two pathways for putrescine degradation, where putrescine is converted into 4-aminobutanoate (gamma-aminobutyrate or GABA) via 4-aminobutanal. Also functions as a cadaverine transaminase in a a L-lysine degradation pathway to succinate that proceeds via cadaverine, glutarate and L-2-hydroxyglutarate. In Escherichia coli O9:H4 (strain HS), this protein is Putrescine aminotransferase.